Here is a 549-residue protein sequence, read N- to C-terminus: Glucose-6-phosphate isomerase (549 aa).

Residue E353 is the Proton donor of the active site. Active-site residues include H384 and K512.

It belongs to the GPI family.

Its subcellular location is the cytoplasm. It catalyses the reaction alpha-D-glucose 6-phosphate = beta-D-fructose 6-phosphate. The protein operates within carbohydrate biosynthesis; gluconeogenesis. It participates in carbohydrate degradation; glycolysis; D-glyceraldehyde 3-phosphate and glycerone phosphate from D-glucose: step 2/4. Functionally, catalyzes the reversible isomerization of glucose-6-phosphate to fructose-6-phosphate. The protein is Glucose-6-phosphate isomerase of Alteromonas mediterranea (strain DSM 17117 / CIP 110805 / LMG 28347 / Deep ecotype).